The following is a 459-amino-acid chain: tRNA modification GTPase MnmE (459 aa).

R20, E85, and R124 together coordinate (6S)-5-formyl-5,6,7,8-tetrahydrofolate. Positions 221 to 380 constitute a TrmE-type G domain; that stretch reads GLSTVIIGRP…LEEAIQSLFY (160 aa). N231 provides a ligand contact to K(+). Residues 231–236, 250–256, and 275–278 each bind GTP; these read NVGKSS, TDIPGTT, and DTAG. S235 lines the Mg(2+) pocket. K(+) is bound by residues T250, I252, and T255. T256 contacts Mg(2+). K459 lines the (6S)-5-formyl-5,6,7,8-tetrahydrofolate pocket.

Belongs to the TRAFAC class TrmE-Era-EngA-EngB-Septin-like GTPase superfamily. TrmE GTPase family. As to quaternary structure, homodimer. Heterotetramer of two MnmE and two MnmG subunits. K(+) is required as a cofactor.

It is found in the cytoplasm. Exhibits a very high intrinsic GTPase hydrolysis rate. Involved in the addition of a carboxymethylaminomethyl (cmnm) group at the wobble position (U34) of certain tRNAs, forming tRNA-cmnm(5)s(2)U34. The chain is tRNA modification GTPase MnmE from Bacillus subtilis (strain 168).